The sequence spans 37 residues: Large ribosomal subunit protein bL36 (37 aa).

It belongs to the bacterial ribosomal protein bL36 family.

The polypeptide is Large ribosomal subunit protein bL36 (Desulfotalea psychrophila (strain LSv54 / DSM 12343)).